A 385-amino-acid polypeptide reads, in one-letter code: Polyketide synthase 1 (385 aa).

The active site involves Cys-157.

This sequence belongs to the thiolase-like superfamily. Chalcone/stilbene synthases family. In terms of tissue distribution, expressed in glandular trichomes.

It is found in the cytoplasm. Its function is as follows. Polyketide synthase responsible for the biosynthesis of secondary metabolites. This Cannabis sativa (Hemp) protein is Polyketide synthase 1 (PKSG1).